A 214-amino-acid polypeptide reads, in one-letter code: Phosphopantothenoylcysteine decarboxylase HAL3 (214 aa).

Residues 30 to 32 (GSV) and 55 to 57 (TRA) each bind FMN. Histidine 92 serves as the catalytic Proton donor. FMN-binding positions include 108–111 (SANT) and alanine 142. N-[(R)-4-phosphopantothenoyl]-L-cysteine is bound by residues asparagine 144, arginine 174, and alanine 176. Cysteine 177 functions as the Proton donor in the catalytic mechanism. Methionine 185 serves as a coordination point for N-[(R)-4-phosphopantothenoyl]-L-cysteine.

It belongs to the HFCD (homooligomeric flavin containing Cys decarboxylase) superfamily. Homotrimer. Requires FMN as cofactor. Mainly expressed in stems, to a lower extent in flowers, leaves and fruits, and at basal levels in roots.

It localises to the cell membrane. The protein localises to the cytoplasm. It catalyses the reaction N-[(R)-4-phosphopantothenoyl]-L-cysteine + H(+) = (R)-4'-phosphopantetheine + CO2. It participates in cofactor biosynthesis; coenzyme A biosynthesis; CoA from (R)-pantothenate: step 3/5. In terms of biological role, involved in plant growth, and promotes salt and osmotic tolerance, probably via coenzyme A (CoA) accumulation and endogenous proline accumulation. Catalyzes the decarboxylation of 4'-phosphopantothenoylcysteine to 4'-phosphopantetheine, a key step in coenzyme A biosynthesis. Required for roots development. The chain is Phosphopantothenoylcysteine decarboxylase HAL3 from Malus domestica (Apple).